We begin with the raw amino-acid sequence, 42 residues long: GHVPCGKDGRKCGYHADCCNCCLSGICKPSTSWTGCSTSTFN.

4 cysteine pairs are disulfide-bonded: cysteine 5/cysteine 19, cysteine 12/cysteine 22, cysteine 18/cysteine 27, and cysteine 21/cysteine 36.

The protein belongs to the conotoxin I1 superfamily. As to expression, expressed by the venom duct.

It is found in the secreted. Functionally, iota-conotoxins bind to voltage-gated sodium channels (Nav) and act as agonists by shifting the voltage-dependence of activation to more hyperpolarized levels. Produces general excitatory symptoms. The polypeptide is Iota-conotoxin-like R11.15 (Conus radiatus (Rayed cone)).